The sequence spans 315 residues: Transcriptional regulator protein Pur-beta (315 aa).

The segment at 1–39 (MADGDSGSERGGGGPGSFQPAPRGGGGPGGEQETQELAS) is disordered. Ala2 is subject to N-acetylalanine. 2 positions are modified to phosphoserine: Ser6 and Ser8. Omega-N-methylarginine is present on Arg23. The segment at 28–254 (PGGEQETQEL…GVFLRVSEVK (227 aa)) is DNA-binding. The residue at position 34 (Thr34) is a Phosphothreonine. Ser104 carries the phosphoserine modification. Arg155 is subject to Omega-N-methylarginine. The interval 200–220 (DDELAGGPGGGAGGPGGGLYG) is disordered. The span at 205 to 219 (GGPGGGAGGPGGGLY) shows a compositional bias: gly residues. N6-acetyllysine is present on Lys270. Residues 288–298 (RQRDKLYERRG) are compositionally biased toward basic and acidic residues. A disordered region spans residues 288 to 315 (RQRDKLYERRGGGSGGGDESEGEEVDED). Arg297 bears the Omega-N-methylarginine mark. Residues Ser301 and Ser307 each carry the phosphoserine modification. A compositionally biased stretch (acidic residues) spans 305 to 315 (DESEGEEVDED).

This sequence belongs to the PUR DNA-binding protein family. In terms of assembly, homodimer, heterodimer with PURA and heterotrimer with PURA and YBX1/Y-box protein 1. Interacts with MYOCD and SRF. In terms of tissue distribution, expressed in muscle cells and in the liver.

The protein resides in the nucleus. Functionally, transcriptional regulator which can act as an activator or a repressor. Represses the transcription of ACTA2 in fibroblasts and smooth muscle cells via its ability to interact with the purine-rich strand of a MCAT- containing element in the 5' flanking region of the gene. Represses the transcription of MYOCD, capable of repressing all isoforms of MYOCD but the magnitude of the repressive effects is most notable for the SMC- specific isoforms. Promotes hepatic glucose production by activating the transcription of ADCY6, leading to cAMP accumulation, increased PKA activity, CREB activation, and increased transcription of PCK1 and G6PC genes. Has capacity to bind repeated elements in single-stranded DNA such as the purine-rich single strand of the PUR element located upstream of the MYC gene. Participates in transcriptional and translational regulation of alpha-MHC expression in cardiac myocytes by binding to the purine-rich negative regulatory (PNR) element. Modulates constitutive liver galectin-3 gene transcription by binding to its promoter. May play a role in the dendritic transport of a subset of mRNAs. The protein is Transcriptional regulator protein Pur-beta (Purb) of Rattus norvegicus (Rat).